The primary structure comprises 1580 residues: Transcriptional activator GLI3 (1580 aa).

N-acetylmethionine is present on Met1. Composition is skewed to polar residues over residues 1-10 (MEAQSHSSTT) and 58-78 (ITMQ…PSTS). The segment at 1–79 (MEAQSHSSTT…KVSEEPSTSS (79 aa)) is disordered. An Omega-N-methylarginine modification is found at Arg175. Residues 368–475 (QSLGSAFGHS…DKDESKQEPE (108 aa)) form a disordered region. Residues 401–427 (NPVQVSSGPSESSQNKPTSESAVSSTG) are compositionally biased toward polar residues. Glycyl lysine isopeptide (Lys-Gly) (interchain with G-Cter in SUMO2) cross-links involve residues Lys438 and Lys462. Residues 461–474 (VKEEGDKDESKQEP) show a composition bias toward basic and acidic residues. C2H2-type zinc fingers lie at residues 480–505 (TNCH…NNDH), 513–540 (FVCR…MRRH), 546–570 (HKCT…LRSH), 576–601 (YVCE…NRTH), and 607–632 (YVCK…KTVH). Residues 620-728 (DPSSLRKHVK…PISNYSNSGL (109 aa)) are disordered. Positions 632-648 (HGPEAHVTKKQRGDIHP) are enriched in basic and acidic residues. Ser664 is modified (phosphoserine). The segment covering 684–699 (SKREECLQVKTVKAEK) has biased composition (basic and acidic residues). A compositionally biased stretch (low complexity) spans 703-726 (SQPSPGGQSSCSSQQSPISNYSNS). Residues 745-845 (DETPIMDSTI…VDVTMLNMLN (101 aa)) are mediates interaction with DZIP1. Lys773 participates in a covalent cross-link: Glycyl lysine isopeptide (Lys-Gly) (interchain with G-Cter in ubiquitin). Lys779 is covalently cross-linked (Glycyl lysine isopeptide (Lys-Gly) (interchain with G-Cter in SUMO2); alternate). Lys779 is covalently cross-linked (Glycyl lysine isopeptide (Lys-Gly) (interchain with G-Cter in ubiquitin); alternate). Glycyl lysine isopeptide (Lys-Gly) (interchain with G-Cter in ubiquitin) cross-links involve residues Lys784 and Lys800. Phosphoserine; by PKA is present on residues Ser849, Ser865, Ser877, and Ser907. A compositionally biased stretch (low complexity) spans 863–882 (RSSGISPCFSSRRSSEASQA). The tract at residues 863-918 (RSSGISPCFSSRRSSEASQAEGRPQNVSVADSYDPISTDASRRSSEASQSDGLPSL) is disordered. The segment covering 908–918 (EASQSDGLPSL) has biased composition (polar residues). Ser980 and Ser1006 each carry phosphoserine; by PKA. Positions 981–1042 (DGGAHGYGRR…PAMATSAEKR (62 aa)) are disordered.

Belongs to the GLI C2H2-type zinc-finger protein family. The full-length GLI3 form (GLI3FL) interacts with SUFU and this interaction regulates the formation of either repressor or activator forms of GLI3. Its association with SUFU is regulated by Hh signaling and dissociation of the SUFU-GLI3 interaction requires the presence of the ciliary motor KIF3A. Interacts with KIF7. The activator form of GLI3 (GLI3A) but not the repressor form (GLI3R) can interact with TRPS1. The phosphorylated form interacts with BTRC. Interacts with ZIC1. Interacts with ZIC3 (via C2H2-type domains 3, 4 and 5); the interaction enhances its transcriptional activity. Interacts with WRD11; the interaction associates EMX1 with GLI3. Interacts with DZIP1; retains GLI3 within the cytoplasm. In terms of processing, phosphorylated on multiple sites by protein kinase A (PKA) and phosphorylation by PKA primes further phosphorylation by CK1 and GSK3. Phosphorylated by DYRK2 (in vitro). Phosphorylation is essential for its proteolytic processing. Transcriptional repressor GLI3R, a C-terminally truncated form, is generated from the full-length GLI3 protein (GLI3FL/GLI3-190) through proteolytic processing. This process requires PKA-primed phosphorylation of GLI3, ubiquitination of GLI3 and the presence of BTRC. GLI3FL is complexed with SUFU in the cytoplasm and is maintained in a neutral state. Without the Hh signal, the SUFU-GLI3 complex is recruited to cilia, leading to the efficient processing of GLI3FL into GLI3R. GLI3R formation leads to its dissociation from SUFU, allowing it to translocate into the nucleus, and repress Hh target genes. When Hh signaling is initiated, SUFU dissociates from GLI3FL and this has two consequences. First, GLI3R production is halted. Second, free GLI3FL translocates to the nucleus, where it is phosphorylated, destabilized, and converted to a transcriptional activator (GLI3A). Phosphorylated in vitro by ULK3. In terms of tissue distribution, is expressed in a wide variety of normal adult tissues, including lung, colon, spleen, placenta, testis, and myometrium.

It is found in the nucleus. It localises to the cytoplasm. The protein localises to the cell projection. Its subcellular location is the cilium. Its function is as follows. Has a dual function as a transcriptional activator and a repressor of the sonic hedgehog (Shh) pathway, and plays a role in limb development. The full-length GLI3 form (GLI3FL) after phosphorylation and nuclear translocation, acts as an activator (GLI3A) while GLI3R, its C-terminally truncated form, acts as a repressor. A proper balance between the GLI3 activator and the repressor GLI3R, rather than the repressor gradient itself or the activator/repressor ratio gradient, specifies limb digit number and identity. In concert with TRPS1, plays a role in regulating the size of the zone of distal chondrocytes, in restricting the zone of PTHLH expression in distal cells and in activating chondrocyte proliferation. Binds to the minimal GLI-consensus sequence 5'-GGGTGGTC-3'. The sequence is that of Transcriptional activator GLI3 (GLI3) from Homo sapiens (Human).